The chain runs to 79 residues: DNA-directed RNA polymerase subunit omega (79 aa).

The protein belongs to the RNA polymerase subunit omega family. In cyanobacteria the RNAP catalytic core is composed of 2 alpha, 1 beta, 1 beta', 1 gamma and 1 omega subunit. When a sigma factor is associated with the core the holoenzyme is formed, which can initiate transcription.

The catalysed reaction is RNA(n) + a ribonucleoside 5'-triphosphate = RNA(n+1) + diphosphate. Promotes RNA polymerase assembly. Latches the N- and C-terminal regions of the beta' subunit thereby facilitating its interaction with the beta and alpha subunits. This chain is DNA-directed RNA polymerase subunit omega, found in Synechococcus sp. (strain JA-2-3B'a(2-13)) (Cyanobacteria bacterium Yellowstone B-Prime).